The sequence spans 146 residues: Hemoglobin subunit beta (146 aa).

Position 1 is an N-acetylvaline (Val1). The Globin domain occupies 2 to 146; sequence HLTGEEKAAV…VANALAHKYH (145 aa). Thr12 bears the Phosphothreonine mark. Ser44 carries the phosphoserine modification. The residue at position 59 (Lys59) is an N6-acetyllysine. His63 is a binding site for heme b. Lys82 is subject to N6-acetyllysine. A heme b-binding site is contributed by His92. Cys93 is modified (S-nitrosocysteine). The residue at position 144 (Lys144) is an N6-acetyllysine.

It belongs to the globin family. As to quaternary structure, heterotetramer of two alpha chains and two beta chains. In terms of tissue distribution, red blood cells.

In terms of biological role, involved in oxygen transport from the lung to the various peripheral tissues. The chain is Hemoglobin subunit beta (HBB) from Martes foina (Beech marten).